The sequence spans 335 residues: Glyceraldehyde-3-phosphate dehydrogenase (335 aa).

NAD(+) is bound by residues Arg-11–Ile-12, Asp-33, and Lys-78. D-glyceraldehyde 3-phosphate contacts are provided by residues Ser-148 to Thr-150, Thr-179, Thr-208 to Gly-209, and Arg-231. An NAD(+)-binding site is contributed by Asn-313.

It belongs to the glyceraldehyde-3-phosphate dehydrogenase family. As to quaternary structure, homotetramer.

The protein resides in the cytoplasm. It carries out the reaction D-glyceraldehyde 3-phosphate + phosphate + NAD(+) = (2R)-3-phospho-glyceroyl phosphate + NADH + H(+). The protein operates within carbohydrate degradation; glycolysis; pyruvate from D-glyceraldehyde 3-phosphate: step 1/5. The sequence is that of Glyceraldehyde-3-phosphate dehydrogenase (GPD) from Pleurotus sajor-caju (Oyster mushroom).